The sequence spans 368 residues: Aminomethyltransferase (368 aa).

Belongs to the GcvT family. In terms of assembly, the glycine cleavage system is composed of four proteins: P, T, L and H.

The catalysed reaction is N(6)-[(R)-S(8)-aminomethyldihydrolipoyl]-L-lysyl-[protein] + (6S)-5,6,7,8-tetrahydrofolate = N(6)-[(R)-dihydrolipoyl]-L-lysyl-[protein] + (6R)-5,10-methylene-5,6,7,8-tetrahydrofolate + NH4(+). The glycine cleavage system catalyzes the degradation of glycine. The sequence is that of Aminomethyltransferase from Xylella fastidiosa (strain M12).